The primary structure comprises 350 residues: Small ribosomal subunit biogenesis GTPase RsgA (350 aa).

Over residues 1–17 the composition is skewed to polar residues; it reads MSKNKLSKGQQRRVNAN. A disordered region spans residues 1 to 33; the sequence is MSKNKLSKGQQRRVNANHQRRLKTSKEKPDYDD. In terms of domain architecture, CP-type G spans 104–273; sequence TSVLTRPDFY…VIDSPGVREF (170 aa). Residues 160–163 and 214–222 each bind GTP; these read NKID and GQSGVGKSS. Residues cysteine 297, cysteine 302, histidine 304, and cysteine 310 each contribute to the Zn(2+) site.

The protein belongs to the TRAFAC class YlqF/YawG GTPase family. RsgA subfamily. Monomer. Associates with 30S ribosomal subunit, binds 16S rRNA. It depends on Zn(2+) as a cofactor.

The protein localises to the cytoplasm. Its function is as follows. One of several proteins that assist in the late maturation steps of the functional core of the 30S ribosomal subunit. Helps release RbfA from mature subunits. May play a role in the assembly of ribosomal proteins into the subunit. Circularly permuted GTPase that catalyzes slow GTP hydrolysis, GTPase activity is stimulated by the 30S ribosomal subunit. The chain is Small ribosomal subunit biogenesis GTPase RsgA from Escherichia fergusonii (strain ATCC 35469 / DSM 13698 / CCUG 18766 / IAM 14443 / JCM 21226 / LMG 7866 / NBRC 102419 / NCTC 12128 / CDC 0568-73).